A 251-amino-acid chain; its full sequence is Ubiquinone/menaquinone biosynthesis C-methyltransferase UbiE (251 aa).

S-adenosyl-L-methionine contacts are provided by residues Thr74, Asp95, 123 to 124 (NA), and Ser140.

The protein belongs to the class I-like SAM-binding methyltransferase superfamily. MenG/UbiE family.

It catalyses the reaction a 2-demethylmenaquinol + S-adenosyl-L-methionine = a menaquinol + S-adenosyl-L-homocysteine + H(+). The catalysed reaction is a 2-methoxy-6-(all-trans-polyprenyl)benzene-1,4-diol + S-adenosyl-L-methionine = a 5-methoxy-2-methyl-3-(all-trans-polyprenyl)benzene-1,4-diol + S-adenosyl-L-homocysteine + H(+). It functions in the pathway quinol/quinone metabolism; menaquinone biosynthesis; menaquinol from 1,4-dihydroxy-2-naphthoate: step 2/2. Its pathway is cofactor biosynthesis; ubiquinone biosynthesis. In terms of biological role, methyltransferase required for the conversion of demethylmenaquinol (DMKH2) to menaquinol (MKH2) and the conversion of 2-polyprenyl-6-methoxy-1,4-benzoquinol (DDMQH2) to 2-polyprenyl-3-methyl-6-methoxy-1,4-benzoquinol (DMQH2). The polypeptide is Ubiquinone/menaquinone biosynthesis C-methyltransferase UbiE (Photorhabdus laumondii subsp. laumondii (strain DSM 15139 / CIP 105565 / TT01) (Photorhabdus luminescens subsp. laumondii)).